Reading from the N-terminus, the 495-residue chain is Glycerol kinase (495 aa).

Residue Thr16 coordinates ADP. Residues Thr16 and Thr17 each contribute to the ATP site. Thr16 lines the sn-glycerol 3-phosphate pocket. Arg20 serves as a coordination point for ADP. Sn-glycerol 3-phosphate is bound by residues Arg86, Glu87, Tyr138, and Asp246. Positions 86, 87, 138, 246, and 247 each coordinate glycerol. Residues Thr268 and Gly316 each contribute to the ADP site. ATP is bound by residues Thr268, Gly316, Gln320, and Gly417. ADP contacts are provided by Gly417 and Asn421.

It belongs to the FGGY kinase family.

The catalysed reaction is glycerol + ATP = sn-glycerol 3-phosphate + ADP + H(+). It functions in the pathway polyol metabolism; glycerol degradation via glycerol kinase pathway; sn-glycerol 3-phosphate from glycerol: step 1/1. With respect to regulation, inhibited by fructose 1,6-bisphosphate (FBP). Its function is as follows. Key enzyme in the regulation of glycerol uptake and metabolism. Catalyzes the phosphorylation of glycerol to yield sn-glycerol 3-phosphate. The polypeptide is Glycerol kinase (Synechocystis sp. (strain ATCC 27184 / PCC 6803 / Kazusa)).